Consider the following 520-residue polypeptide: Cytochrome P450 monooxygenase vrtE (520 aa).

Residues 16 to 36 (ALSLLHYVLGAIFLLLLFHML) form a helical membrane-spanning segment. Asparagine 137 carries an N-linked (GlcNAc...) asparagine glycan. Cysteine 459 lines the heme pocket.

The protein belongs to the cytochrome P450 family. Heme is required as a cofactor.

It localises to the membrane. The protein operates within secondary metabolite biosynthesis; terpenoid biosynthesis. Functionally, cytochrome P450 monooxygenase; part of the gene cluster that mediates the biosynthesis of viridicatumtoxin, a tetracycline-like fungal meroterpenoid with a unique, fused spirobicyclic ring system. The first step of the pathway is the production of the malonamoyl-CoA starter unit for the polyketide synthase vrtA. The aldolase vrtJ may be involved in the synthesis of the malonamate substrate for malonamoyl-CoA synthetase vrtB. The polyketide synthase vrtA then may utilize the malonamoyl-CoA starter unit, followed by sequential condensation of eight malonyl-CoA units to form the polyketide backbone. The cyclization of the last ring could be mediated by the lactamase-like protein vrtG. The proposed post-PKS tailoring steps are a hydroxylation at C5 catalyzed the cytochrome P450 monooxygenase vrtE, a hydroxylation at C12a catalyzed by VrtH and/or VrtI, and an O-methylation by the O-methyltransferase vrtF. VrtC is then proposed to catalyze the transfer of a geranyl group synthesized by vrtD to the aromatic C ring of the tetracyclic polyketide intermediate of viridicatumtoxin to yield previridicatumtoxin. Finally, the cytochrome P450 monooxygenase vrtK catalyzes the spirocyclization of the geranyl moiety of previridicatumtoxin to afford viridicatumtoxin. The sequence is that of Cytochrome P450 monooxygenase vrtE from Penicillium aethiopicum.